Reading from the N-terminus, the 226-residue chain is NifU-like protein 1, chloroplastic (226 aa).

The N-terminal 76 residues, 1–76 (MQTTTVPMAA…PVTAVQLPLT (76 aa)), are a transit peptide targeting the chloroplast.

The protein belongs to the NifU family. In terms of assembly, homodimer; disulfide-linked.

The protein resides in the plastid. It localises to the chloroplast stroma. Molecular scaffold for [Fe-S] cluster assembly of chloroplastic iron-sulfur proteins. The protein is NifU-like protein 1, chloroplastic (NIFU1) of Oryza sativa subsp. japonica (Rice).